We begin with the raw amino-acid sequence, 302 residues long: Aspartate carbamoyltransferase catalytic subunit (302 aa).

Positions 53 and 54 each coordinate carbamoyl phosphate. Lys-82 contributes to the L-aspartate binding site. Positions 103, 131, and 134 each coordinate carbamoyl phosphate. L-aspartate is bound by residues Arg-164 and Arg-223. Residues Leu-260 and Pro-261 each contribute to the carbamoyl phosphate site.

It belongs to the aspartate/ornithine carbamoyltransferase superfamily. ATCase family. Heterooligomer of catalytic and regulatory chains.

The enzyme catalyses carbamoyl phosphate + L-aspartate = N-carbamoyl-L-aspartate + phosphate + H(+). Its pathway is pyrimidine metabolism; UMP biosynthesis via de novo pathway; (S)-dihydroorotate from bicarbonate: step 2/3. Its function is as follows. Catalyzes the condensation of carbamoyl phosphate and aspartate to form carbamoyl aspartate and inorganic phosphate, the committed step in the de novo pyrimidine nucleotide biosynthesis pathway. This is Aspartate carbamoyltransferase catalytic subunit from Methanococcus maripaludis (strain C6 / ATCC BAA-1332).